The chain runs to 366 residues: Neutral protease 2 homolog MGYG_04094 (366 aa).

The signal sequence occupies residues 1–19 (MQILAALSAIGALVATATA). A propeptide spanning residues 20–188 (AAVPNAPAKQ…NKSRSTIDKR (169 aa)) is cleaved from the precursor. 2 cysteine pairs are disulfide-bonded: Cys-196–Cys-267 and Cys-274–Cys-292. His-317 is a binding site for Zn(2+). Glu-318 is an active-site residue. 2 residues coordinate Zn(2+): His-321 and Asp-332.

It belongs to the peptidase M35 family. Zn(2+) is required as a cofactor.

The protein localises to the secreted. The enzyme catalyses Preferential cleavage of bonds with hydrophobic residues in P1'. Also 3-Asn-|-Gln-4 and 8-Gly-|-Ser-9 bonds in insulin B chain.. In terms of biological role, secreted metalloproteinase that allows assimilation of proteinaceous substrates. Shows high activities on basic nuclear substrates such as histone and protamine. May be involved in virulence. In Arthroderma gypseum (strain ATCC MYA-4604 / CBS 118893) (Microsporum gypseum), this protein is Neutral protease 2 homolog MGYG_04094.